Here is a 251-residue protein sequence, read N- to C-terminus: PF03932 family protein CutC (251 aa).

The protein belongs to the CutC family.

Its subcellular location is the cytoplasm. This is PF03932 family protein CutC from Agrobacterium fabrum (strain C58 / ATCC 33970) (Agrobacterium tumefaciens (strain C58)).